Reading from the N-terminus, the 719-residue chain is Polyribonucleotide nucleotidyltransferase (719 aa).

Aspartate 507 and aspartate 513 together coordinate Mg(2+). Positions 573–633 constitute a KH domain; sequence PKLELFSVDP…EQIKAAKDYI (61 aa). The S1 motif domain maps to 658–719; it reads GQEFQGIVKK…NGKISVDLCE (62 aa).

Belongs to the polyribonucleotide nucleotidyltransferase family. Mg(2+) is required as a cofactor.

It localises to the cytoplasm. The enzyme catalyses RNA(n+1) + phosphate = RNA(n) + a ribonucleoside 5'-diphosphate. Its function is as follows. Involved in mRNA degradation. Catalyzes the phosphorolysis of single-stranded polyribonucleotides processively in the 3'- to 5'-direction. In Campylobacter jejuni subsp. jejuni serotype O:23/36 (strain 81-176), this protein is Polyribonucleotide nucleotidyltransferase.